We begin with the raw amino-acid sequence, 146 residues long: Putative pre-16S rRNA nuclease (146 aa).

This sequence belongs to the YqgF nuclease family.

The protein localises to the cytoplasm. Could be a nuclease involved in processing of the 5'-end of pre-16S rRNA. The protein is Putative pre-16S rRNA nuclease of Pseudomonas savastanoi pv. phaseolicola (strain 1448A / Race 6) (Pseudomonas syringae pv. phaseolicola (strain 1448A / Race 6)).